The sequence spans 283 residues: Pantothenate synthetase (283 aa).

30-37 (MGYLHEGH) contributes to the ATP binding site. Residue His37 is the Proton donor of the active site. Gln61 is a (R)-pantoate binding site. Position 61 (Gln61) interacts with beta-alanine. 147 to 150 (GLKD) lines the ATP pocket. Gln153 is a (R)-pantoate binding site. ATP contacts are provided by residues Val176 and 184 to 187 (KSSR).

Belongs to the pantothenate synthetase family. In terms of assembly, homodimer.

The protein localises to the cytoplasm. It carries out the reaction (R)-pantoate + beta-alanine + ATP = (R)-pantothenate + AMP + diphosphate + H(+). It participates in cofactor biosynthesis; (R)-pantothenate biosynthesis; (R)-pantothenate from (R)-pantoate and beta-alanine: step 1/1. In terms of biological role, catalyzes the condensation of pantoate with beta-alanine in an ATP-dependent reaction via a pantoyl-adenylate intermediate. This is Pantothenate synthetase from Halalkalibacterium halodurans (strain ATCC BAA-125 / DSM 18197 / FERM 7344 / JCM 9153 / C-125) (Bacillus halodurans).